A 345-amino-acid chain; its full sequence is L-threonine 3-dehydrogenase (345 aa).

Cys-42 contacts Zn(2+). Residues Thr-44 and His-47 each act as charge relay system in the active site. His-67, Glu-68, Cys-97, Cys-100, Cys-103, and Cys-111 together coordinate Zn(2+). NAD(+) is bound by residues Ile-179, Asp-199, Arg-204, 266 to 268 (LGI), and 290 to 291 (IY).

It belongs to the zinc-containing alcohol dehydrogenase family. In terms of assembly, homotetramer. The cofactor is Zn(2+).

It localises to the cytoplasm. The catalysed reaction is L-threonine + NAD(+) = (2S)-2-amino-3-oxobutanoate + NADH + H(+). It participates in amino-acid degradation; L-threonine degradation via oxydo-reductase pathway; glycine from L-threonine: step 1/2. Its function is as follows. Catalyzes the NAD(+)-dependent oxidation of L-threonine to 2-amino-3-ketobutyrate. The sequence is that of L-threonine 3-dehydrogenase from Rhizobium etli (strain ATCC 51251 / DSM 11541 / JCM 21823 / NBRC 15573 / CFN 42).